We begin with the raw amino-acid sequence, 140 residues long: Ribosome-binding factor A (140 aa).

The span at 118–133 (DEAKQQKHNGKDKTDT) shows a compositional bias: basic and acidic residues. Residues 118-140 (DEAKQQKHNGKDKTDTADSEGEE) form a disordered region.

It belongs to the RbfA family. In terms of assembly, monomer. Binds 30S ribosomal subunits, but not 50S ribosomal subunits or 70S ribosomes.

The protein localises to the cytoplasm. One of several proteins that assist in the late maturation steps of the functional core of the 30S ribosomal subunit. Associates with free 30S ribosomal subunits (but not with 30S subunits that are part of 70S ribosomes or polysomes). Required for efficient processing of 16S rRNA. May interact with the 5'-terminal helix region of 16S rRNA. The polypeptide is Ribosome-binding factor A (Shewanella woodyi (strain ATCC 51908 / MS32)).